We begin with the raw amino-acid sequence, 63 residues long: Large ribosomal subunit protein uL30 (63 aa).

This sequence belongs to the universal ribosomal protein uL30 family. As to quaternary structure, part of the 50S ribosomal subunit.

The chain is Large ribosomal subunit protein uL30 from Bradyrhizobium sp. (strain BTAi1 / ATCC BAA-1182).